A 372-amino-acid chain; its full sequence is MVKELNLEQYNVRTDLAIEAHDIVKEQEAQEAKQPASTVEGFDIEETVMDGVKVSKVVIHPLGAERTGKKAGRYLTFESQGIRKKDTDIQEKMERVFAQQFSQFMGELGITKDHTCLVVGLGNWNVTPDALGPITVENLLVTRHLFTLAPEEVGEGFRPVSAIAPGVMGVTGIETSDVIYGIIEQTKPDFVIAVDALASRSIERVNATIQVSDTGIHPGSGVGNKRKELSKETLGIPVIAVGIPTVVDAVTITSDAIDYVLKHFGRELREREKPSRALAPAGMTFGERRELTDEDLPPEEKRKTFLGMMGTLPEGEKRQLIQEVLAPLGHNLMVTPKEVDVFIEDMANVIASGLNAALHQGVNQDNVGAYTH.

Positions 1–15 (MVKELNLEQYNVRTD) are excised as a propeptide.

Belongs to the peptidase A25 family. As to quaternary structure, homotetramer. In terms of processing, autoproteolytically processed. The inactive tetrameric zymogen termed p46 autoprocesses to a smaller form termed p41, which is active only during spore germination.

The catalysed reaction is Endopeptidase action with P4 Glu or Asp, P1 preferably Glu &gt; Asp, P1' hydrophobic and P2' Ala.. Its function is as follows. Initiates the rapid degradation of small, acid-soluble proteins during spore germination. The chain is Germination protease from Halalkalibacterium halodurans (strain ATCC BAA-125 / DSM 18197 / FERM 7344 / JCM 9153 / C-125) (Bacillus halodurans).